The chain runs to 105 residues: MPTLTQQKIRIRLKAYDHRLLDTSCDKIVDTARRTDAVPVGPIPLPTRRRIYCVLRSPHIDKDSREHFETRTHRRIIDIYSPSSKTIDALMKLDLPAGVDIEVKL.

The protein belongs to the universal ribosomal protein uS10 family. Part of the 30S ribosomal subunit.

Involved in the binding of tRNA to the ribosomes. This Synechococcus sp. (strain JA-2-3B'a(2-13)) (Cyanobacteria bacterium Yellowstone B-Prime) protein is Small ribosomal subunit protein uS10.